A 92-amino-acid chain; its full sequence is Large ribosomal subunit protein uL23 (92 aa).

It belongs to the universal ribosomal protein uL23 family. In terms of assembly, part of the 50S ribosomal subunit. Contacts protein L29, and trigger factor when it is bound to the ribosome.

Functionally, one of the early assembly proteins it binds 23S rRNA. One of the proteins that surrounds the polypeptide exit tunnel on the outside of the ribosome. Forms the main docking site for trigger factor binding to the ribosome. The protein is Large ribosomal subunit protein uL23 of Bdellovibrio bacteriovorus (strain ATCC 15356 / DSM 50701 / NCIMB 9529 / HD100).